We begin with the raw amino-acid sequence, 372 residues long: tRNA-specific 2-thiouridylase MnmA (372 aa).

ATP-binding positions include 6–13 (AMSGGVDS) and Leu-32. Catalysis depends on Cys-101, which acts as the Nucleophile. Residues Cys-101 and Cys-193 are joined by a disulfide bond. An ATP-binding site is contributed by Gly-125. The tract at residues 143-145 (KDQ) is interaction with tRNA. Cys-193 (cysteine persulfide intermediate) is an active-site residue.

The protein belongs to the MnmA/TRMU family.

The protein localises to the cytoplasm. It carries out the reaction S-sulfanyl-L-cysteinyl-[protein] + uridine(34) in tRNA + AH2 + ATP = 2-thiouridine(34) in tRNA + L-cysteinyl-[protein] + A + AMP + diphosphate + H(+). Functionally, catalyzes the 2-thiolation of uridine at the wobble position (U34) of tRNA, leading to the formation of s(2)U34. The protein is tRNA-specific 2-thiouridylase MnmA of Corynebacterium kroppenstedtii (strain DSM 44385 / JCM 11950 / CIP 105744 / CCUG 35717).